Reading from the N-terminus, the 743-residue chain is Catalase-peroxidase (743 aa).

The segment at 1–22 is disordered; that stretch reads MEKQSNDAAVAGAPNDHGAAKC. The segment at residues 105 to 227 is a cross-link (tryptophyl-tyrosyl-methioninium (Trp-Tyr) (with M-253)); it reads WHSAGTYRIT…LGAVQMGLIY (123 aa). Residue His-106 is the Proton acceptor of the active site. Positions 227-253 form a cross-link, tryptophyl-tyrosyl-methioninium (Tyr-Met) (with W-105); it reads YVNPEGPNGNPDPVAAAKDIRETFFRM. Residue His-268 coordinates heme b.

Belongs to the peroxidase family. Peroxidase/catalase subfamily. As to quaternary structure, homodimer or homotetramer. Heme b serves as cofactor. Post-translationally, formation of the three residue Trp-Tyr-Met cross-link is important for the catalase, but not the peroxidase activity of the enzyme.

The catalysed reaction is H2O2 + AH2 = A + 2 H2O. It carries out the reaction 2 H2O2 = O2 + 2 H2O. In terms of biological role, bifunctional enzyme with both catalase and broad-spectrum peroxidase activity. This is Catalase-peroxidase from Solibacter usitatus (strain Ellin6076).